The chain runs to 195 residues: Rac-like GTP-binding protein ARAC4 (195 aa).

GTP contacts are provided by residues 12-19 (GDGAVGKT), 30-37 (FPTDYVPT), 59-63 (DTAGQ), and 117-120 (TKLD). An Effector region motif is present at residues 34 to 42 (YVPTVFDNF). A Cysteine methyl ester modification is found at Cys192. A lipid anchor (S-geranylgeranyl cysteine) is attached at Cys192. The propeptide at 193 to 195 (AFL) is removed in mature form.

It belongs to the small GTPase superfamily. Rho family. As to quaternary structure, interacts with SPK1, ICR1, ICR5 and PIR. Ubiquitous.

The protein resides in the cytoplasm. Its subcellular location is the cell membrane. Inactive GDP-bound Rho GTPases reside in the cytosol, are found in a complex with Rho GDP-dissociation inhibitors (Rho GDIs), and are released from the GDI protein in order to translocate to membranes upon activation. Involved in cell polarity control during the actin-dependent tip growth of root hairs, thus regulating root hair length and root hair initiation. Contributes, in a SPK1-dependent manner, to the prevention of cortical microtubules organization into parallel arrays oriented perpendicular to the axis of cell elongation to limit anisotropic cell growth during petal development. May regulate a WAVE complex that activates the Arp2/3 complex. This chain is Rac-like GTP-binding protein ARAC4, found in Arabidopsis thaliana (Mouse-ear cress).